The following is a 142-amino-acid chain: ATP synthase epsilon chain (142 aa).

Belongs to the ATPase epsilon chain family. F-type ATPases have 2 components, CF(1) - the catalytic core - and CF(0) - the membrane proton channel. CF(1) has five subunits: alpha(3), beta(3), gamma(1), delta(1), epsilon(1). CF(0) has three main subunits: a, b and c.

It is found in the cell membrane. Produces ATP from ADP in the presence of a proton gradient across the membrane. The polypeptide is ATP synthase epsilon chain (Lactiplantibacillus plantarum (strain ATCC BAA-793 / NCIMB 8826 / WCFS1) (Lactobacillus plantarum)).